A 339-amino-acid polypeptide reads, in one-letter code: ATPase GET3 (339 aa).

Lys-34–Thr-41 contributes to the ATP binding site. The active site involves Asp-63. ATP contacts are provided by Glu-243 and Asn-270. Positions 281 and 284 each coordinate Zn(2+).

Belongs to the arsA ATPase family. Homodimer.

It is found in the cytoplasm. It localises to the endoplasmic reticulum. Functionally, ATPase required for the post-translational delivery of tail-anchored (TA) proteins to the endoplasmic reticulum. Recognizes and selectively binds the transmembrane domain of TA proteins in the cytosol. This complex then targets to the endoplasmic reticulum by membrane-bound receptors, where the tail-anchored protein is released for insertion. This process is regulated by ATP binding and hydrolysis. ATP binding drives the homodimer towards the closed dimer state, facilitating recognition of newly synthesized TA membrane proteins. ATP hydrolysis is required for insertion. Subsequently, the homodimer reverts towards the open dimer state, lowering its affinity for the membrane-bound receptor, and returning it to the cytosol to initiate a new round of targeting. This Coccidioides immitis (strain RS) (Valley fever fungus) protein is ATPase GET3.